We begin with the raw amino-acid sequence, 232 residues long: Orotidine 5'-phosphate decarboxylase (232 aa).

Residues D13, K35, 62-71, T122, R182, Q191, G211, and R212 each bind substrate; that span reads DLKFHDIPNT. The active-site Proton donor is the K64.

This sequence belongs to the OMP decarboxylase family. Type 1 subfamily. In terms of assembly, homodimer.

The enzyme catalyses orotidine 5'-phosphate + H(+) = UMP + CO2. It functions in the pathway pyrimidine metabolism; UMP biosynthesis via de novo pathway; UMP from orotate: step 2/2. Its function is as follows. Catalyzes the decarboxylation of orotidine 5'-monophosphate (OMP) to uridine 5'-monophosphate (UMP). This chain is Orotidine 5'-phosphate decarboxylase, found in Pseudomonas syringae pv. syringae (strain B728a).